The sequence spans 334 residues: Phosphatidylglycerol--prolipoprotein diacylglyceryl transferase (334 aa).

4 helical membrane-spanning segments follow: residues 22-42 (FLPFRIQTYALIILTGIVVAA), 54-74 (AEPGVVLDVLLWAVPLGIIGA), 105-125 (IWEGGNAIFGALIGGAVGVGI), and 131-151 (GLRFWTFADALAPALLLAQAI). Residue arginine 153 coordinates a 1,2-diacyl-sn-glycero-3-phospho-(1'-sn-glycerol). 2 helical membrane-spanning segments follow: residues 191-211 (LFQPLFLYEIVWNVIGVFVIL) and 251-271 (FLGIPSNVWAAFAAVVLGAII). A disordered region spans residues 296-334 (PQAEVESGETDPEEILHADDDEERTGTHKPQATSLSGSN). A compositionally biased stretch (acidic residues) spans 301-318 (ESGETDPEEILHADDDEE). A compositionally biased stretch (polar residues) spans 323 to 334 (HKPQATSLSGSN).

Belongs to the Lgt family.

It localises to the cell membrane. The catalysed reaction is L-cysteinyl-[prolipoprotein] + a 1,2-diacyl-sn-glycero-3-phospho-(1'-sn-glycerol) = an S-1,2-diacyl-sn-glyceryl-L-cysteinyl-[prolipoprotein] + sn-glycerol 1-phosphate + H(+). The protein operates within protein modification; lipoprotein biosynthesis (diacylglyceryl transfer). Functionally, catalyzes the transfer of the diacylglyceryl group from phosphatidylglycerol to the sulfhydryl group of the N-terminal cysteine of a prolipoprotein, the first step in the formation of mature lipoproteins. The sequence is that of Phosphatidylglycerol--prolipoprotein diacylglyceryl transferase from Leifsonia xyli subsp. xyli (strain CTCB07).